Reading from the N-terminus, the 259-residue chain is DNA-directed RNA polymerase subunit Rpo3 (259 aa).

It belongs to the archaeal Rpo3/eukaryotic RPB3 RNA polymerase subunit family. As to quaternary structure, part of the RNA polymerase complex.

The protein localises to the cytoplasm. It carries out the reaction RNA(n) + a ribonucleoside 5'-triphosphate = RNA(n+1) + diphosphate. Functionally, DNA-dependent RNA polymerase (RNAP) catalyzes the transcription of DNA into RNA using the four ribonucleoside triphosphates as substrates. The chain is DNA-directed RNA polymerase subunit Rpo3 from Pyrobaculum arsenaticum (strain DSM 13514 / JCM 11321 / PZ6).